The sequence spans 491 residues: Cobyric acid synthase (491 aa).

The region spanning G251–F444 is the GATase cobBQ-type domain. C329 (nucleophile) is an active-site residue. H436 is a catalytic residue.

It belongs to the CobB/CobQ family. CobQ subfamily.

The protein operates within cofactor biosynthesis; adenosylcobalamin biosynthesis. In terms of biological role, catalyzes amidations at positions B, D, E, and G on adenosylcobyrinic A,C-diamide. NH(2) groups are provided by glutamine, and one molecule of ATP is hydrogenolyzed for each amidation. The protein is Cobyric acid synthase of Chloroflexus aggregans (strain MD-66 / DSM 9485).